The sequence spans 279 residues: Lectin 9 (279 aa).

Residues 1-23 form the signal peptide; that stretch reads MALSSALIKIFITFLFLQNHVNS. Asn-116, Asn-139, Asn-235, and Asn-272 each carry an N-linked (GlcNAc...) asparagine glycan.

It belongs to the leguminous lectin family.

Functionally, may be involved in arbuscular mycorrhizal (AM) symbiosis with AM fungi. In Medicago truncatula (Barrel medic), this protein is Lectin 9.